A 647-amino-acid chain; its full sequence is DNA topoisomerase 3 (647 aa).

The 134-residue stretch at 2–135 (TRLFIAEKPS…KKETVQRLLI (134 aa)) folds into the Toprim domain. Mg(2+)-binding residues include Glu-8, Asp-104, and Asp-106. A Topo IA-type catalytic domain is found at 156–608 (FIPLSVSALA…TLQGRLEQLI (453 aa)). An interaction with DNA region spans residues 195-200 (SVGRVQ). Tyr-332 acts as the O-(5'-phospho-DNA)-tyrosine intermediate in catalysis.

This sequence belongs to the type IA topoisomerase family. Mg(2+) serves as cofactor.

The catalysed reaction is ATP-independent breakage of single-stranded DNA, followed by passage and rejoining.. Releases the supercoiling and torsional tension of DNA, which is introduced during the DNA replication and transcription, by transiently cleaving and rejoining one strand of the DNA duplex. Introduces a single-strand break via transesterification at a target site in duplex DNA. The scissile phosphodiester is attacked by the catalytic tyrosine of the enzyme, resulting in the formation of a DNA-(5'-phosphotyrosyl)-enzyme intermediate and the expulsion of a 3'-OH DNA strand. The free DNA strand then undergoes passage around the unbroken strand, thus removing DNA supercoils. Finally, in the religation step, the DNA 3'-OH attacks the covalent intermediate to expel the active-site tyrosine and restore the DNA phosphodiester backbone. The polypeptide is DNA topoisomerase 3 (Vibrio cholerae serotype O1 (strain ATCC 39315 / El Tor Inaba N16961)).